Consider the following 547-residue polypeptide: uncharacterized protein (547 aa).

The tract at residues Met-1–Ser-37 is disordered. Positions Lys-10–Lys-21 are enriched in basic and acidic residues. Residues Lys-24–Ser-37 show a composition bias toward polar residues. 2 consecutive C3H1-type zinc fingers follow at residues Asn-41–Leu-67 and Glu-68–Pro-95. The tract at residues Ser-132 to Gly-176 is disordered. Residues Ala-147–Ser-162 show a composition bias toward polar residues. Ser-343 is subject to Phosphoserine. The residue at position 344 (Tyr-344) is a Phosphotyrosine. 6 positions are modified to phosphoserine: Ser-353, Ser-355, Ser-483, Ser-489, Ser-495, and Ser-499. Thr-502 is modified (phosphothreonine). The span at Val-526 to Thr-536 shows a compositional bias: polar residues. The disordered stretch occupies residues Val-526–Asp-547. A compositionally biased stretch (acidic residues) spans Val-537–Asp-547.

This is an uncharacterized protein from Schizosaccharomyces pombe (strain 972 / ATCC 24843) (Fission yeast).